We begin with the raw amino-acid sequence, 26 residues long: Melittin (26 aa).

Glycine 1 is modified (N-formylglycine; partial). A Glutamine amide modification is found at glutamine 26.

It belongs to the melittin family. Monomer (in solution and for integration into membranes), homotetramer (in solution and potentially as a toroidal pore in membranes), and potenially homomultimer (as a toroidal pore in membranes). Expressed by the venom gland.

It is found in the secreted. The protein resides in the target cell membrane. Functionally, main toxin of bee venom with strong hemolytic activity and antimicrobial activity. It has enhancing effects on bee venom phospholipase A2 activity. This amphipathic toxin binds to negatively charged membrane surface and forms pore by inserting into lipid bilayers inducing the leakage of ions and molecules and the enhancement of permeability that ultimately leads to cell lysis. It acts as a voltage-gated pore with higher selectivity for anions over cations. The ion conductance has been shown to be voltage-dependent. Self-association of melittin in membranes is promoted by high ionic strength, but not by the presence of negatively charged lipids. In vivo, intradermal injection into healthy human volunteers produce sharp pain sensation and an inflammatory response. It produces pain by activating primary nociceptor cells directly and indirectly due to its ability to activate plasma membrane phospholipase A2 and its pore-forming activity. The protein is Melittin (MELT) of Apis florea (Dwarf honeybee).